Consider the following 436-residue polypeptide: Peptidase B (436 aa).

Mn(2+)-binding residues include lysine 201 and aspartate 206. Residue lysine 213 is part of the active site. Residues aspartate 224, aspartate 283, and glutamate 285 each contribute to the Mn(2+) site. Residue arginine 287 is part of the active site.

Belongs to the peptidase M17 family. In terms of assembly, homohexamer. The cofactor is Mn(2+).

Its subcellular location is the cytoplasm. It carries out the reaction Release of an N-terminal amino acid, Xaa, from a peptide or arylamide. Xaa is preferably Glu or Asp but may be other amino acids, including Leu, Met, His, Cys and Gln.. Its function is as follows. Probably plays an important role in intracellular peptide degradation. This is Peptidase B from Pectobacterium atrosepticum (strain SCRI 1043 / ATCC BAA-672) (Erwinia carotovora subsp. atroseptica).